The following is a 252-amino-acid chain: Enolase-phosphatase E1 (252 aa).

Residues Asp-14 and Glu-16 each contribute to the Mg(2+) site. Substrate contacts are provided by residues 143 to 144 (SS) and Lys-177. Residue Asp-202 participates in Mg(2+) binding.

This sequence belongs to the HAD-like hydrolase superfamily. MasA/MtnC family. As to quaternary structure, monomer. It depends on Mg(2+) as a cofactor.

It is found in the cytoplasm. The protein resides in the nucleus. The catalysed reaction is 5-methylsulfanyl-2,3-dioxopentyl phosphate + H2O = 1,2-dihydroxy-5-(methylsulfanyl)pent-1-en-3-one + phosphate. It participates in amino-acid biosynthesis; L-methionine biosynthesis via salvage pathway; L-methionine from S-methyl-5-thio-alpha-D-ribose 1-phosphate: step 3/6. It functions in the pathway amino-acid biosynthesis; L-methionine biosynthesis via salvage pathway; L-methionine from S-methyl-5-thio-alpha-D-ribose 1-phosphate: step 4/6. In terms of biological role, bifunctional enzyme that catalyzes the enolization of 2,3-diketo-5-methylthiopentyl-1-phosphate (DK-MTP-1-P) into the intermediate 2-hydroxy-3-keto-5-methylthiopentenyl-1-phosphate (HK-MTPenyl-1-P), which is then dephosphorylated to form the acireductone 1,2-dihydroxy-3-keto-5-methylthiopentene (DHK-MTPene). This is Enolase-phosphatase E1 from Drosophila persimilis (Fruit fly).